Here is a 432-residue protein sequence, read N- to C-terminus: D-amino acid dehydrogenase (432 aa).

3 to 17 (VVILGSGVVGVASAW) is a binding site for FAD.

This sequence belongs to the DadA oxidoreductase family. FAD serves as cofactor.

It carries out the reaction a D-alpha-amino acid + A + H2O = a 2-oxocarboxylate + AH2 + NH4(+). It functions in the pathway amino-acid degradation; D-alanine degradation; NH(3) and pyruvate from D-alanine: step 1/1. Its function is as follows. Oxidative deamination of D-amino acids. This is D-amino acid dehydrogenase from Escherichia coli O127:H6 (strain E2348/69 / EPEC).